We begin with the raw amino-acid sequence, 225 residues long: MNATTAPLPYSAARLHELAHVLIANIRELAHAGWTPATSSNFSHRLDEQHAAITVSGRDKGRLVEEDIMVVDFDGLAVGRPLRPSAETLLHTQLYRRFPEICCVLHTHSPVQTIASRLYAGSDVIRLEGYELLKAFEGNTTHETAVEVPVFANTQDMQVLAAQVDALLDKQSVWGYLIEGHGLYAWGRNMAEARRHLEAFEFLLQCELELLKLRGTRQVVPVPHS.

Zn(2+)-binding residues include H106 and H108.

The protein belongs to the aldolase class II family. MtnB subfamily. It depends on Zn(2+) as a cofactor.

It carries out the reaction 5-(methylsulfanyl)-D-ribulose 1-phosphate = 5-methylsulfanyl-2,3-dioxopentyl phosphate + H2O. It functions in the pathway amino-acid biosynthesis; L-methionine biosynthesis via salvage pathway; L-methionine from S-methyl-5-thio-alpha-D-ribose 1-phosphate: step 2/6. Functionally, catalyzes the dehydration of methylthioribulose-1-phosphate (MTRu-1-P) into 2,3-diketo-5-methylthiopentyl-1-phosphate (DK-MTP-1-P). The polypeptide is Methylthioribulose-1-phosphate dehydratase (Xanthomonas oryzae pv. oryzae (strain KACC10331 / KXO85)).